Reading from the N-terminus, the 874-residue chain is Alanine--tRNA ligase (874 aa).

Positions 562, 566, 665, and 669 each coordinate Zn(2+).

This sequence belongs to the class-II aminoacyl-tRNA synthetase family. Requires Zn(2+) as cofactor.

It is found in the cytoplasm. It carries out the reaction tRNA(Ala) + L-alanine + ATP = L-alanyl-tRNA(Ala) + AMP + diphosphate. In terms of biological role, catalyzes the attachment of alanine to tRNA(Ala) in a two-step reaction: alanine is first activated by ATP to form Ala-AMP and then transferred to the acceptor end of tRNA(Ala). Also edits incorrectly charged Ser-tRNA(Ala) and Gly-tRNA(Ala) via its editing domain. This is Alanine--tRNA ligase from Pseudomonas putida (strain ATCC 47054 / DSM 6125 / CFBP 8728 / NCIMB 11950 / KT2440).